The following is a 435-amino-acid chain: AP-2 complex subunit mu (435 aa).

The region spanning 170 to 434 is the MHD domain; the sequence is RNELFLDVLE…IGRSGIYETR (265 aa). The a 1,2-diacyl-sn-glycero-3-phospho-(1D-myo-inositol-3,4,5-trisphosphate) site is built by Lys341, Lys345, and Lys354.

The protein belongs to the adaptor complexes medium subunit family. Adaptor protein complex 2 (AP-2) is a heterotetramer composed of two large adaptins (alpha-type subunit and beta-type subunit), a medium adaptin (mu-type subunit) and a small adaptin (sigma-type subunit).

Its subcellular location is the cell membrane. The protein localises to the membrane. It is found in the coated pit. In terms of biological role, component of the adaptor complexes which link clathrin to receptors in coated vesicles. Clathrin-associated protein complexes are believed to interact with the cytoplasmic tails of membrane proteins, leading to their selection and concentration. AP50 is a subunit of the plasma membrane adaptor. The complex binds polyphosphoinositide-containing lipids. The protein is AP-2 complex subunit mu (ap2m1) of Xenopus laevis (African clawed frog).